A 413-amino-acid polypeptide reads, in one-letter code: Arginine biosynthesis bifunctional protein ArgJ 1 (413 aa).

Residues threonine 154, lysine 180, threonine 191, glutamate 277, asparagine 408, and threonine 413 each coordinate substrate. The Nucleophile role is filled by threonine 191.

It belongs to the ArgJ family. As to quaternary structure, heterotetramer of two alpha and two beta chains.

The protein resides in the cytoplasm. The catalysed reaction is N(2)-acetyl-L-ornithine + L-glutamate = N-acetyl-L-glutamate + L-ornithine. It catalyses the reaction L-glutamate + acetyl-CoA = N-acetyl-L-glutamate + CoA + H(+). It functions in the pathway amino-acid biosynthesis; L-arginine biosynthesis; L-ornithine and N-acetyl-L-glutamate from L-glutamate and N(2)-acetyl-L-ornithine (cyclic): step 1/1. The protein operates within amino-acid biosynthesis; L-arginine biosynthesis; N(2)-acetyl-L-ornithine from L-glutamate: step 1/4. Functionally, catalyzes two activities which are involved in the cyclic version of arginine biosynthesis: the synthesis of N-acetylglutamate from glutamate and acetyl-CoA as the acetyl donor, and of ornithine by transacetylation between N(2)-acetylornithine and glutamate. In Nostoc sp. (strain PCC 7120 / SAG 25.82 / UTEX 2576), this protein is Arginine biosynthesis bifunctional protein ArgJ 1.